A 163-amino-acid polypeptide reads, in one-letter code: Type VII secretion system protein EsaG (163 aa).

Interacts with EssD (via C-terminus). Interacts with EssE.

The protein localises to the cytoplasm. In terms of biological role, component of the type VII secretion system (Ess). Also acts as part of toxin-antitoxin system. Counteracts the toxic effect of EssD via direct interaction. The polypeptide is Type VII secretion system protein EsaG (Staphylococcus aureus (strain NCTC 8325 / PS 47)).